Here is a 156-residue protein sequence, read N- to C-terminus: Methylated-DNA--protein-cysteine methyltransferase (156 aa).

The Nucleophile; methyl group acceptor role is filled by cysteine 126.

This sequence belongs to the MGMT family.

It localises to the cytoplasm. It carries out the reaction a 6-O-methyl-2'-deoxyguanosine in DNA + L-cysteinyl-[protein] = S-methyl-L-cysteinyl-[protein] + a 2'-deoxyguanosine in DNA. The catalysed reaction is a 4-O-methyl-thymidine in DNA + L-cysteinyl-[protein] = a thymidine in DNA + S-methyl-L-cysteinyl-[protein]. Functionally, involved in the cellular defense against the biological effects of O6-methylguanine (O6-MeG) and O4-methylthymine (O4-MeT) in DNA. Repairs the methylated nucleobase in DNA by stoichiometrically transferring the methyl group to a cysteine residue in the enzyme. This is a suicide reaction: the enzyme is irreversibly inactivated. In Methanosarcina acetivorans (strain ATCC 35395 / DSM 2834 / JCM 12185 / C2A), this protein is Methylated-DNA--protein-cysteine methyltransferase.